Reading from the N-terminus, the 1507-residue chain is MSSSSEISVAGSDVSFEGRLTQHGRHEETPADQLTKILSGRSHEDADGDDAHSDNRSILSRSRRSSTAELSPEMVGRVQSLADVLSRHTSRSGGNIDLSQLSESDRFDAERIIGSFVRDADEQGIHLRKAGVTLEHVSARGADSTAMEGATFGNVLCLPYTIYKAIRDKSGSKMRTILNDVSGLARAGEMVLVLGRPGAGCSSMLKVTAGEIDQFAGGVEGEIMYDGIPQKEMMKRYKPDVIYNGEQDVHFPHLTVQQTLDFAIACKTPSKRVNDVSREEYIASTRDLHATIFGLRHTYHTKVGNDFVRGVSGGERKRVSIAEALVTKGSIYCWDNATRGLDASTALEYAKAIRITTNLLGSTAFVTIYQASENIYETFDKVTVLYTGRQIYFGPIDEAKDYFYRMGYECPPRQVTAEFLTALTDVNGYHKIRPGYENKVPRTAEEFERYWQESPEYRQLLIDIDQYKKEIDTEKTKEIYDQSMQQEKSKHARKKSYYTVSFWEQIRLCTKRGFQRIYGDKAYTVITICSAIIQSLVSGSLYYNTPSSTSGAFSRGGVLYFCLLYYSLMGLANLSFEHRPILQKHKIYSLYHPAAEALGSTIANFPFRMIGMTCFLIIIYFLSGLNRTASSFFRVYLFLTMCSESINALFELIAAGCDNISQANSISGIVMMSISLYSTYMIQLPSMRPWFKWISYILPIRYAFESMLLAEFHGRHMGCGGTLVPSGPGYENIASENQVCAFVGSKPGQSWVLGDDYLRLQFEYEYKHEWRNFGIMWCFLLGYIALKALITEIKRPVKGGGDALIFKKGTRKYHMKLDEEDGELHEIDTKEKFSSRSGSSTTSEDEIFEELESKGIFIWRNVCYTIPYDGGMRQLLDNVSGFCKPGTLTALMGESGAGKTTLLNTLAQRNVGIITGDMLVNGKPIDISFERRTGYVQQQDIHISELTVRESLQFSARMRRAQNVPEEEKMEHVERIIKVLDMEEYADALVGDVGRGLNVEQRKKLSIGVELVAKPDLLLFLDEPTSGLDSQSSWAIVQLLKKLAKAGQSILCTIHQPSATLFEEFDRLLLLKKGGQTVYFGDIGDNSKTLLSYFERNGARKCSPSENPAEYILEAIGAGATASVTEDWHQIWKNSDEFISTEKEVDHLIDQLSNQKTESEFGDAPTKYATSYAYQFKWVLIRTSMSLWRNLDYIMSKMMLMTVGGLYIGFTFYDPGDSYTGLQNTLFAAFISIILSAPAMNQIQARAIAARELFEVRESKSNMFHWSLLLITQYLSEIPYHFLFSAIFFVSSYFPLRTHFQASASAVYYLNYSIMFQLYYIGFGLCVLYMAPNLQSANVILGLCLSFLIAFCGVVQPVSLMPGFWTFMWKTSPYTYFVQNMVGILLHNKPVICRKKELSIFDPPAGQTCQEFTQAFLDKRGGYIANPNATTACEYCIYEVGDDYLKHISASYSYLWRNFGLYWAYIGFNICAMVAIYYIFHVRGVSFKFDRVFKLFSRITRRGKKSN.

The interval methionine 1–glutamate 73 is disordered. Over residues arginine 41–asparagine 55 the composition is skewed to basic and acidic residues. N-linked (GlcNAc...) asparagine glycans are attached at residues asparagine 55 and asparagine 336. The region spanning cysteine 157–proline 412 is the ABC transporter 1 domain. The next 3 helical transmembrane spans lie at alanine 522–tyrosine 542, glycine 556–phenylalanine 576, and phenylalanine 605–leucine 625. Residue asparagine 626 is glycosylated (N-linked (GlcNAc...) asparagine). The chain crosses the membrane as a helical span at residues valine 635–alanine 655. A glycan (N-linked (GlcNAc...) asparagine) is linked at asparagine 659. Transmembrane regions (helical) follow at residues serine 665–proline 685 and phenylalanine 773–isoleucine 793. Positions phenylalanine 857–alanine 1099 constitute an ABC transporter 2 domain. Asparagine 878 is a glycosylation site (N-linked (GlcNAc...) asparagine). Glycine 893–threonine 900 lines the ATP pocket. 3 helical membrane passes run tyrosine 1193–tyrosine 1213, threonine 1220–methionine 1240, and leucine 1270–valine 1290. A glycan (N-linked (GlcNAc...) asparagine) is linked at asparagine 1311. The next 2 membrane-spanning stretches (helical) occupy residues isoleucine 1314–leucine 1334 and valine 1339–serine 1359. Residue asparagine 1428 is glycosylated (N-linked (GlcNAc...) asparagine). Residues phenylalanine 1459 to isoleucine 1479 traverse the membrane as a helical segment.

The protein belongs to the ABC transporter superfamily. ABCG family. PDR (TC 3.A.1.205) subfamily.

It is found in the cell membrane. ABC multidrug transporter involved in the response to azoles such as fluconazole, itraconazole, ketoconazole and voriconazole and contributes to the development of PDR1-dependent azole resistance. Plays a role in biofilm tolerance to fluconazole. Also confers resistance to 4-nitroquinoline-N-oxide (4-NQO). This Candida glabrata (strain ATCC 2001 / BCRC 20586 / JCM 3761 / NBRC 0622 / NRRL Y-65 / CBS 138) (Yeast) protein is ABC multidrug transporter SNQ2.